The chain runs to 540 residues: E3 ubiquitin-protein ligase rnf8-A (540 aa).

Residues 30–84 enclose the FHA domain; it reads VTLGRGLGVTYQLKPTLCPLMISRTHCLFKQNTGGEWTVTDNKSLNGVWRNKERL. Positions 128–205 are disordered; it reads LIRPLPDKTK…SGTESRLNDS (78 aa). Polar residues-rich tracts occupy residues 152 to 162 and 179 to 200; these read ASGNEGPSNFS and SSHT…GTES. Residues 382-420 form an RING-type zinc finger; sequence CIICSEHFIEAVTLNCAHSFCSYCIKSWKKRKEECPICR. Residues 517-540 are disordered; sequence GTDELDSSDFESDDDEEEDSFLII. Acidic residues predominate over residues 519–540; sequence DELDSSDFESDDDEEEDSFLII.

It belongs to the RNF8 family. In terms of assembly, homodimer. Forms a E2-E3 ubiquitin ligase complex composed of the rnf8 homodimer and a E2 heterodimer of ube2n and ube2v2.

It is found in the nucleus. It carries out the reaction S-ubiquitinyl-[E2 ubiquitin-conjugating enzyme]-L-cysteine + [acceptor protein]-L-lysine = [E2 ubiquitin-conjugating enzyme]-L-cysteine + N(6)-ubiquitinyl-[acceptor protein]-L-lysine.. The protein operates within protein modification; protein ubiquitination. E3 ubiquitin-protein ligase that plays a key role in DNA damage signaling via 2 distinct roles: by mediating the 'Lys-63'-linked ubiquitination of histones H2A and H2AX and promoting the recruitment of DNA repair proteins at double-strand breaks (DSBs) sites, and by catalyzing 'Lys-48'-linked ubiquitination to remove target proteins from DNA damage sites. Following DNA DSBs, it is recruited to the sites of damage by ATM-phosphorylated mdc1 and catalyzes the 'Lys-63'-linked ubiquitination of histones H2A and H2AX, thereby promoting the formation of tp53bp1 and brca1 ionizing radiation-induced foci (IRIF). H2A ubiquitination also mediates the ATM-dependent transcriptional silencing at regions flanking DSBs in cis, a mechanism to avoid collision between transcription and repair intermediates. Also catalyzes the formation of 'Lys-48'-linked polyubiquitin chains, leading to degradation of substrate proteins. In addition to its function in damage signaling, also plays a role in higher-order chromatin structure by mediating extensive chromatin decondensation. This chain is E3 ubiquitin-protein ligase rnf8-A, found in Xenopus laevis (African clawed frog).